A 249-amino-acid polypeptide reads, in one-letter code: Secreted flagellin C (249 aa).

Post-translationally, the secreted form is about 1 kDa larger than the whole cell lysate form, presumably due to post-translational modification. A 22 kDa form is also found in the secreted fraction, probably resulting from proteolysis.

It localises to the secreted. The protein localises to the host cell surface. Plays a role in virulence. In Campylobacter jejuni subsp. jejuni serotype O:2 (strain ATCC 700819 / NCTC 11168), this protein is Secreted flagellin C (flaC).